Here is a 319-residue protein sequence, read N- to C-terminus: Ribosomal RNA small subunit methyltransferase H (319 aa).

S-adenosyl-L-methionine is bound by residues 35–37 (AGH), Asp-55, Phe-84, Asp-104, and Gln-111.

The protein belongs to the methyltransferase superfamily. RsmH family.

The protein resides in the cytoplasm. It carries out the reaction cytidine(1402) in 16S rRNA + S-adenosyl-L-methionine = N(4)-methylcytidine(1402) in 16S rRNA + S-adenosyl-L-homocysteine + H(+). Its function is as follows. Specifically methylates the N4 position of cytidine in position 1402 (C1402) of 16S rRNA. This Enterococcus hirae protein is Ribosomal RNA small subunit methyltransferase H.